The primary structure comprises 437 residues: Serine carboxypeptidase-like 17 (437 aa).

The N-terminal stretch at 1–26 is a signal peptide; that stretch reads MGKECYYLSWILKFHLLLVLIQLVDS. Disulfide bonds link Cys85–Cys327, Cys249–Cys263, and Cys287–Cys293. Asn106 carries an N-linked (GlcNAc...) asparagine glycan. Ser181 is a catalytic residue. Asp362 is a catalytic residue. N-linked (GlcNAc...) asparagine glycosylation is present at Asn378. His415 is a catalytic residue.

Belongs to the peptidase S10 family. Expressed in seedlings and siliques.

The protein localises to the secreted. Its function is as follows. Probable carboxypeptidase. The protein is Serine carboxypeptidase-like 17 (SCPL17) of Arabidopsis thaliana (Mouse-ear cress).